The sequence spans 397 residues: Exodeoxyribonuclease 7 large subunit (397 aa).

Belongs to the XseA family. Heterooligomer composed of large and small subunits.

The protein localises to the cytoplasm. It carries out the reaction Exonucleolytic cleavage in either 5'- to 3'- or 3'- to 5'-direction to yield nucleoside 5'-phosphates.. Its function is as follows. Bidirectionally degrades single-stranded DNA into large acid-insoluble oligonucleotides, which are then degraded further into small acid-soluble oligonucleotides. This Anaplasma marginale (strain St. Maries) protein is Exodeoxyribonuclease 7 large subunit.